Reading from the N-terminus, the 288-residue chain is Homoserine kinase (288 aa).

79–89 (PPARGLGSSSA) contributes to the ATP binding site.

This sequence belongs to the GHMP kinase family. Homoserine kinase subfamily.

The protein localises to the cytoplasm. It catalyses the reaction L-homoserine + ATP = O-phospho-L-homoserine + ADP + H(+). It participates in amino-acid biosynthesis; L-threonine biosynthesis; L-threonine from L-aspartate: step 4/5. Functionally, catalyzes the ATP-dependent phosphorylation of L-homoserine to L-homoserine phosphate. The protein is Homoserine kinase of Listeria monocytogenes serotype 4a (strain HCC23).